A 55-amino-acid polypeptide reads, in one-letter code: Large ribosomal subunit protein bL33 (55 aa).

This sequence belongs to the bacterial ribosomal protein bL33 family.

The sequence is that of Large ribosomal subunit protein bL33 from Enterobacter sp. (strain 638).